The following is a 200-amino-acid chain: Small ribosomal subunit protein uS4 (200 aa).

Residues 22–43 form a disordered region; the sequence is TGKELQKRPYPPGQHGPSQRRK. The S4 RNA-binding domain occupies 92-152; that stretch reads SRLDNLVYRL…EKSRNLQVIK (61 aa).

It belongs to the universal ribosomal protein uS4 family. Part of the 30S ribosomal subunit. Contacts protein S5. The interaction surface between S4 and S5 is involved in control of translational fidelity.

In terms of biological role, one of the primary rRNA binding proteins, it binds directly to 16S rRNA where it nucleates assembly of the body of the 30S subunit. Functionally, with S5 and S12 plays an important role in translational accuracy. The protein is Small ribosomal subunit protein uS4 of Geobacillus sp. (strain WCH70).